The sequence spans 341 residues: N-acetyl-gamma-glutamyl-phosphate reductase (341 aa).

Cys-148 is an active-site residue.

Belongs to the NAGSA dehydrogenase family. Type 1 subfamily.

The protein localises to the cytoplasm. It carries out the reaction N-acetyl-L-glutamate 5-semialdehyde + phosphate + NADP(+) = N-acetyl-L-glutamyl 5-phosphate + NADPH + H(+). It participates in amino-acid biosynthesis; L-arginine biosynthesis; N(2)-acetyl-L-ornithine from L-glutamate: step 3/4. Its function is as follows. Catalyzes the NADPH-dependent reduction of N-acetyl-5-glutamyl phosphate to yield N-acetyl-L-glutamate 5-semialdehyde. The chain is N-acetyl-gamma-glutamyl-phosphate reductase from Pseudothermotoga lettingae (strain ATCC BAA-301 / DSM 14385 / NBRC 107922 / TMO) (Thermotoga lettingae).